A 350-amino-acid chain; its full sequence is tRNA uridine(34) hydroxylase (350 aa).

A Rhodanese domain is found at Asp-146 to Leu-240. Cys-200 (cysteine persulfide intermediate) is an active-site residue.

The protein belongs to the TrhO family.

The enzyme catalyses uridine(34) in tRNA + AH2 + O2 = 5-hydroxyuridine(34) in tRNA + A + H2O. In terms of biological role, catalyzes oxygen-dependent 5-hydroxyuridine (ho5U) modification at position 34 in tRNAs, the first step in 5-carboxymethoxyuridine (cmo5U) biosynthesis. May be part of an alternate pathway, which is able to bypass cmo5U biogenesis in a subset of tRNAs under aerobic conditions. In Escherichia coli (strain SE11), this protein is tRNA uridine(34) hydroxylase.